Here is a 131-residue protein sequence, read N- to C-terminus: Small ribosomal subunit protein uS8 (131 aa).

It belongs to the universal ribosomal protein uS8 family. Part of the 30S ribosomal subunit. Contacts proteins S5 and S12.

One of the primary rRNA binding proteins, it binds directly to 16S rRNA central domain where it helps coordinate assembly of the platform of the 30S subunit. This chain is Small ribosomal subunit protein uS8, found in Parabacteroides distasonis (strain ATCC 8503 / DSM 20701 / CIP 104284 / JCM 5825 / NCTC 11152).